Here is a 201-residue protein sequence, read N- to C-terminus: Protein ripply1 (201 aa).

The interval 1-29 (MDPAASPAAAPPAAPAAAPAADPAADPAA) is disordered. Over residues 15 to 29 (PAAAPAADPAADPAA) the composition is skewed to low complexity. Residues 57-60 (AYLW) carry the WRPW motif motif. The segment at 99–134 (HPVRLYWPKSHSFDYLYSAGEILLNNFPVQATINLY) is ripply homology domain. The span at 136 to 174 (DSDSADNEEDKEEEEEEEEEEDDEEEEEDEDKDVNENEP) shows a compositional bias: acidic residues. The segment at 136–201 (DSDSADNEED…SPDPHSACPN (66 aa)) is disordered.

Belongs to the ripply family. As to expression, expressed in the anterior presomitic mesoderm and somites of stage E9.5 dpc embryos. Also expressed in tongue, diaphragm and intercostal muscles at 16.5 dpc.

It is found in the nucleus. Its function is as follows. Plays a role in somitogenesis. Essential for transcriptional repression of the segmental patterning genes, thus terminating the segmentation program in the presomitic mesoderm, and also required for the maintenance of rostrocaudal polarity in somites. The polypeptide is Protein ripply1 (Mus musculus (Mouse)).